Here is a 98-residue protein sequence, read N- to C-terminus: Aspartyl/glutamyl-tRNA(Asn/Gln) amidotransferase subunit C (98 aa).

The interval 77–98 is disordered; sequence NEAPNPEGDFFRVPQILNTDEE.

Belongs to the GatC family. As to quaternary structure, heterotrimer of A, B and C subunits.

It carries out the reaction L-glutamyl-tRNA(Gln) + L-glutamine + ATP + H2O = L-glutaminyl-tRNA(Gln) + L-glutamate + ADP + phosphate + H(+). It catalyses the reaction L-aspartyl-tRNA(Asn) + L-glutamine + ATP + H2O = L-asparaginyl-tRNA(Asn) + L-glutamate + ADP + phosphate + 2 H(+). Its function is as follows. Allows the formation of correctly charged Asn-tRNA(Asn) or Gln-tRNA(Gln) through the transamidation of misacylated Asp-tRNA(Asn) or Glu-tRNA(Gln) in organisms which lack either or both of asparaginyl-tRNA or glutaminyl-tRNA synthetases. The reaction takes place in the presence of glutamine and ATP through an activated phospho-Asp-tRNA(Asn) or phospho-Glu-tRNA(Gln). This is Aspartyl/glutamyl-tRNA(Asn/Gln) amidotransferase subunit C from Crocosphaera subtropica (strain ATCC 51142 / BH68) (Cyanothece sp. (strain ATCC 51142)).